Reading from the N-terminus, the 573-residue chain is Proline--tRNA ligase (573 aa).

The protein belongs to the class-II aminoacyl-tRNA synthetase family. ProS type 1 subfamily. As to quaternary structure, homodimer.

The protein localises to the cytoplasm. The catalysed reaction is tRNA(Pro) + L-proline + ATP = L-prolyl-tRNA(Pro) + AMP + diphosphate. Functionally, catalyzes the attachment of proline to tRNA(Pro) in a two-step reaction: proline is first activated by ATP to form Pro-AMP and then transferred to the acceptor end of tRNA(Pro). As ProRS can inadvertently accommodate and process non-cognate amino acids such as alanine and cysteine, to avoid such errors it has two additional distinct editing activities against alanine. One activity is designated as 'pretransfer' editing and involves the tRNA(Pro)-independent hydrolysis of activated Ala-AMP. The other activity is designated 'posttransfer' editing and involves deacylation of mischarged Ala-tRNA(Pro). The misacylated Cys-tRNA(Pro) is not edited by ProRS. The sequence is that of Proline--tRNA ligase from Chromohalobacter salexigens (strain ATCC BAA-138 / DSM 3043 / CIP 106854 / NCIMB 13768 / 1H11).